Reading from the N-terminus, the 810-residue chain is LPS-assembly protein LptD (810 aa).

A signal peptide spans 1–29 (MTKWTLGYSYPIALTISLIPALTPAIVQA).

It belongs to the LptD family. Component of the lipopolysaccharide transport and assembly complex. Interacts with LptE and LptA.

The protein localises to the cell outer membrane. Its function is as follows. Together with LptE, is involved in the assembly of lipopolysaccharide (LPS) at the surface of the outer membrane. This is LPS-assembly protein LptD from Aeromonas salmonicida (strain A449).